Reading from the N-terminus, the 384-residue chain is Beta-lactamase (384 aa).

Residues 1-29 (MDNSMKNIFRQGRLFIALSLAMTSISAFA) form the signal peptide. Catalysis depends on serine 87, which acts as the Acyl-ester intermediate. Tyrosine 172 serves as the catalytic Proton acceptor. 337-339 (KTG) serves as a coordination point for substrate.

It belongs to the class-C beta-lactamase family.

The protein localises to the periplasm. It catalyses the reaction a beta-lactam + H2O = a substituted beta-amino acid. This protein is a serine beta-lactamase with a substrate specificity for cephalosporins. This chain is Beta-lactamase (ampC), found in Providencia stuartii.